The sequence spans 74 residues: MAKPCAAFLVFLCLSMLILSIPDISCQMNDCDCDHDHRCGEWEDESHGNCKQHHLRVVCTCTLDCLDISSTSNA.

A signal peptide spans 1-26 (MAKPCAAFLVFLCLSMLILSIPDISC). 3 cysteine pairs are disulfide-bonded: cysteine 26–cysteine 50, cysteine 33–cysteine 59, and cysteine 39–cysteine 61.

This sequence belongs to the DEFL family.

It localises to the secreted. This Arabidopsis thaliana (Mouse-ear cress) protein is Putative defensin-like protein 12.